Consider the following 352-residue polypeptide: Isoflavone-7-O-methyltransferase 6 (352 aa).

Residue 118-127 (VLDPTLSGSY) coordinates substrate. The S-adenosyl-L-methionine site is built by Gly-196, Asp-219, Asp-239, Met-240, and Lys-253. His-257 (proton acceptor) is an active-site residue.

Belongs to the class I-like SAM-binding methyltransferase superfamily. Cation-independent O-methyltransferase family. COMT subfamily. As to quaternary structure, homodimer.

The catalysed reaction is a 7-hydroxyisoflavone + S-adenosyl-L-methionine = a 7-methoxyisoflavone + S-adenosyl-L-homocysteine + H(+). Its pathway is phytoalexin biosynthesis; medicarpin biosynthesis. Its function is as follows. Transfers a methyl group to 7-hydroxyls of the isoflavones daidzein, genistein and 6,7,4'-trihydroxyisoflavone. Can also methylate (+)6a-hydroxymaackiain with lower efficiency. This chain is Isoflavone-7-O-methyltransferase 6, found in Medicago sativa (Alfalfa).